The primary structure comprises 339 residues: DNA-directed RNA polymerase subunit alpha (339 aa).

The alpha N-terminal domain (alpha-NTD) stretch occupies residues 1–235 (MVIQKNWQEL…DQLQVFVNFE (235 aa)). The alpha C-terminal domain (alpha-CTD) stretch occupies residues 251–339 (FNPALLKKVD…DLAKRFEEHY (89 aa)).

This sequence belongs to the RNA polymerase alpha chain family. As to quaternary structure, homodimer. The RNAP catalytic core consists of 2 alpha, 1 beta, 1 beta' and 1 omega subunit. When a sigma factor is associated with the core the holoenzyme is formed, which can initiate transcription.

It catalyses the reaction RNA(n) + a ribonucleoside 5'-triphosphate = RNA(n+1) + diphosphate. Functionally, DNA-dependent RNA polymerase catalyzes the transcription of DNA into RNA using the four ribonucleoside triphosphates as substrates. In Methylobacterium radiotolerans (strain ATCC 27329 / DSM 1819 / JCM 2831 / NBRC 15690 / NCIMB 10815 / 0-1), this protein is DNA-directed RNA polymerase subunit alpha.